The primary structure comprises 103 residues: Histone H4 (103 aa).

The span at 1-14 shows a compositional bias: gly residues; it reads MSGRGKGGKGLGKG. The tract at residues 1–20 is disordered; the sequence is MSGRGKGGKGLGKGGAKRHR. Residue S2 is modified to N-acetylserine. K17 carries the post-translational modification N6-acetyllysine. A DNA-binding region spans residues 17-21; that stretch reads KRHRK. K21 carries the post-translational modification N6-methyllysine.

Belongs to the histone H4 family. The nucleosome is a histone octamer containing two molecules each of H2A, H2B, H3 and H4 assembled in one H3-H4 heterotetramer and two H2A-H2B heterodimers. The octamer wraps approximately 147 bp of DNA.

The protein resides in the nucleus. It is found in the chromosome. Core component of nucleosome. Nucleosomes wrap and compact DNA into chromatin, limiting DNA accessibility to the cellular machineries which require DNA as a template. Histones thereby play a central role in transcription regulation, DNA repair, DNA replication and chromosomal stability. DNA accessibility is regulated via a complex set of post-translational modifications of histones, also called histone code, and nucleosome remodeling. The protein is Histone H4 of Pyrenomonas salina.